Here is a 62-residue protein sequence, read N- to C-terminus: Large ribosomal subunit protein bL28 (62 aa).

This sequence belongs to the bacterial ribosomal protein bL28 family.

In Helicobacter pylori (strain P12), this protein is Large ribosomal subunit protein bL28.